The primary structure comprises 69 residues: DNA-directed RNA polymerase subunit epsilon (69 aa).

It belongs to the RNA polymerase subunit epsilon family. As to quaternary structure, RNAP is composed of a core of 2 alpha, a beta and a beta' subunit. The core is associated with a delta subunit, and at least one of epsilon or omega. When a sigma factor is associated with the core the holoenzyme is formed, which can initiate transcription.

The enzyme catalyses RNA(n) + a ribonucleoside 5'-triphosphate = RNA(n+1) + diphosphate. In terms of biological role, a non-essential component of RNA polymerase (RNAP). The chain is DNA-directed RNA polymerase subunit epsilon from Bacillus pumilus (strain SAFR-032).